The primary structure comprises 369 residues: UDP-N-acetylglucosamine--N-acetylmuramyl-(pentapeptide) pyrophosphoryl-undecaprenol N-acetylglucosamine transferase (369 aa).

UDP-N-acetyl-alpha-D-glucosamine is bound by residues 10–12, Asn-124, Arg-161, Ser-195, and Gln-295; that span reads TAG.

Belongs to the glycosyltransferase 28 family. MurG subfamily.

The protein localises to the cell membrane. The catalysed reaction is di-trans,octa-cis-undecaprenyl diphospho-N-acetyl-alpha-D-muramoyl-L-alanyl-D-glutamyl-meso-2,6-diaminopimeloyl-D-alanyl-D-alanine + UDP-N-acetyl-alpha-D-glucosamine = di-trans,octa-cis-undecaprenyl diphospho-[N-acetyl-alpha-D-glucosaminyl-(1-&gt;4)]-N-acetyl-alpha-D-muramoyl-L-alanyl-D-glutamyl-meso-2,6-diaminopimeloyl-D-alanyl-D-alanine + UDP + H(+). It participates in cell wall biogenesis; peptidoglycan biosynthesis. Cell wall formation. Catalyzes the transfer of a GlcNAc subunit on undecaprenyl-pyrophosphoryl-MurNAc-pentapeptide (lipid intermediate I) to form undecaprenyl-pyrophosphoryl-MurNAc-(pentapeptide)GlcNAc (lipid intermediate II). In Acidothermus cellulolyticus (strain ATCC 43068 / DSM 8971 / 11B), this protein is UDP-N-acetylglucosamine--N-acetylmuramyl-(pentapeptide) pyrophosphoryl-undecaprenol N-acetylglucosamine transferase.